A 617-amino-acid chain; its full sequence is Chaperone protein HscA homolog (617 aa).

The protein belongs to the heat shock protein 70 family.

Its function is as follows. Probable chaperone. Has a low intrinsic ATPase activity which is markedly stimulated by HscB. In Vibrio parahaemolyticus serotype O3:K6 (strain RIMD 2210633), this protein is Chaperone protein HscA homolog.